A 201-amino-acid polypeptide reads, in one-letter code: MGAYKYVAEMERRKQSDVLRFLLRVRCWEYRQLNVIHRASRPSRPDKARRLGYKAKQGYVIYRVRVRRGNRKRPAPKGATFGKPVNQGINQLKFQRSLRSTAEERVARRCGGLRILNSYWITKTVSTSTLKSSLSTPSTRLSVVMPVSTGSATPYTSAENLAVSHPLGKQNRGLGRGSKHTKSPNHAFWKRTNKLFLRRYR.

Belongs to the eukaryotic ribosomal protein eL15 family.

This chain is Large ribosomal subunit protein eL15 (RPL15), found in Quercus suber (Cork oak).